Reading from the N-terminus, the 589-residue chain is Vesicular glutamate transporter 3 (589 aa).

The Cytoplasmic portion of the chain corresponds to 1–76; that stretch reads MPFKAFDTFK…CHCCGLPKRY (76 aa). Residues 40-49 are compositionally biased toward acidic residues; that stretch reads TEEEDNIELN. Residues 40-61 form a disordered region; the sequence is TEEEDNIELNEEGRPVQTSRPS. A helical transmembrane segment spans residues 77-97; the sequence is IIAIMSGLGFCISFGIRCNLG. Topologically, residues 98–130 are vesicular; that stretch reads VAIVEMVNNSTVYVDGKPEIQTAQFNWDPETVG. An N-linked (GlcNAc...) asparagine glycan is attached at Asn-106. The helical transmembrane segment at 131 to 151 threads the bilayer; the sequence is LIHGSFFWGYIMTQIPGGFIS. Residues 152–153 lie on the Cytoplasmic side of the membrane; that stretch reads NK. Residues 154-174 form a helical membrane-spanning segment; the sequence is FAANRVFGAAIFLTSTLNMFI. Residues 175-182 lie on the Vesicular side of the membrane; sequence PSAARVHY. A helical transmembrane segment spans residues 183–203; sequence GCVMCVRILQGLVEGVTYPAC. The Cytoplasmic segment spans residues 204 to 221; that stretch reads HGMWSKWAPPLERSRLAT. The helical transmembrane segment at 222–242 threads the bilayer; that stretch reads TSFCGSYAGAVVAMPLAGVLV. Residues 243 to 249 lie on the Vesicular side of the membrane; sequence QYIGWSS. A helical membrane pass occupies residues 250-270; that stretch reads VFYIYGMFGIIWYMFWLLQAY. At 271-314 the chain is on the cytoplasmic side; the sequence is ECPAAHPTISNEEKTYIETSIGEGANVVSLSKFSTPWKRFFTSL. The chain crosses the membrane as a helical span at residues 315–335; that stretch reads PVYAIIVANFCRSWTFYLLLI. Topologically, residues 336-353 are vesicular; that stretch reads SQPAYFEEVFGFAISKVG. The helical transmembrane segment at 354–374 threads the bilayer; sequence LLSAVPHMVMTIVVPIGGQLA. Residues 375–390 lie on the Cytoplasmic side of the membrane; the sequence is DYLRSRQILTTTAVRK. Residues 391–411 traverse the membrane as a helical segment; that stretch reads IMNCGGFGMEATLLLVVGFSH. The Vesicular portion of the chain corresponds to 412–413; the sequence is TK. A helical transmembrane segment spans residues 414-434; sequence GVAISFLVLAVGFSGFAISGF. Residues 435–447 lie on the Cytoplasmic side of the membrane; sequence NVNHLDIAPRYAS. Residues 448–468 traverse the membrane as a helical segment; it reads ILMGISNGVGTLSGMVCPLIV. Topologically, residues 469–481 are vesicular; sequence GAMTRHKTREEWQ. The helical transmembrane segment at 482–502 threads the bilayer; the sequence is NVFLIAALVHYSGVIFYGVFA. Topologically, residues 503–586 are cytoplasmic; the sequence is SGEKQEWADP…SYQNEERNFS (84 aa). The disordered stretch occupies residues 559 to 589; the sequence is KKEWKGQRGATLDEEELTSYQNEERNFSTIS. Residues 580–589 are compositionally biased toward basic and acidic residues; sequence NEERNFSTIS.

This sequence belongs to the major facilitator superfamily. Sodium/anion cotransporter family. VGLUT subfamily. Expressed in amygdala, cerebellum, hippocampus, medulla, spinal cord and thalamus.

Its subcellular location is the cytoplasmic vesicle. The protein localises to the secretory vesicle. The protein resides in the synaptic vesicle membrane. It is found in the cell membrane. It localises to the synapse. Its subcellular location is the synaptosome. The enzyme catalyses L-glutamate(out) = L-glutamate(in). It catalyses the reaction 3 Na(+)(out) + phosphate(out) = 3 Na(+)(in) + phosphate(in). It carries out the reaction chloride(in) = chloride(out). With respect to regulation, the L-glutamate uniporter activity exhibits a biphasic dependence on chloride concentration. Chloride channel activity is allosterically activated by lumenal H(+) and Cl(-) leading to synaptic vesicles acidification. The glutamate transport activity is allosterically activated by lumenal H(+) and Cl(-), preventing non-vesicular L-glutamate release. In terms of biological role, multifunctional transporter that transports L-glutamate as well as multiple ions such as chloride, sodium and phosphate. At the synaptic vesicle membrane, mainly functions as an uniporter that mediates the uptake of L-glutamate into synaptic vesicles at presynaptic nerve terminals of excitatory neural cells. The L-glutamate uniporter activity is electrogenic and is driven by the proton electrochemical gradient, mainly by the electrical gradient established by the vacuolar H(+)-ATPase across the synaptic vesicle membrane. In addition, functions as a chloride channel that allows a chloride permeation through the synaptic vesicle membrane that affects the proton electrochemical gradient and promotes synaptic vesicles acidification. At the plasma membrane, following exocytosis, functions as a symporter of Na(+) and phosphate from the extracellular space to the cytoplasm allowing synaptic phosphate homeostasis regulation. The symporter activity is electrogenic. Moreover, operates synergistically with SLC18A3/VACHT under a constant H(+) gradient, thereby allowing striatal vesicular acetylcholine uptake. The chain is Vesicular glutamate transporter 3 from Homo sapiens (Human).